We begin with the raw amino-acid sequence, 423 residues long: Serine hydroxymethyltransferase (423 aa).

Residues leucine 120 and 124–126 (GHL) each bind (6S)-5,6,7,8-tetrahydrofolate. At lysine 229 the chain carries N6-(pyridoxal phosphate)lysine. 353–355 (SPF) contacts (6S)-5,6,7,8-tetrahydrofolate.

The protein belongs to the SHMT family. As to quaternary structure, homodimer. It depends on pyridoxal 5'-phosphate as a cofactor.

The protein resides in the cytoplasm. It carries out the reaction (6R)-5,10-methylene-5,6,7,8-tetrahydrofolate + glycine + H2O = (6S)-5,6,7,8-tetrahydrofolate + L-serine. Its pathway is one-carbon metabolism; tetrahydrofolate interconversion. It participates in amino-acid biosynthesis; glycine biosynthesis; glycine from L-serine: step 1/1. Catalyzes the reversible interconversion of serine and glycine with tetrahydrofolate (THF) serving as the one-carbon carrier. This reaction serves as the major source of one-carbon groups required for the biosynthesis of purines, thymidylate, methionine, and other important biomolecules. Also exhibits THF-independent aldolase activity toward beta-hydroxyamino acids, producing glycine and aldehydes, via a retro-aldol mechanism. In Prochlorococcus marinus (strain MIT 9301), this protein is Serine hydroxymethyltransferase.